Reading from the N-terminus, the 424-residue chain is UPF0229 protein Avin_46880 (424 aa).

Positions 57–108 (RDIDEPVLHHGRGGKQTIVHPGNKEFTAGERIPRPSGGGGGGSGSGKASNSG) are disordered. A compositionally biased stretch (gly residues) spans 92–101 (SGGGGGGSGS).

Belongs to the UPF0229 family.

This is UPF0229 protein Avin_46880 from Azotobacter vinelandii (strain DJ / ATCC BAA-1303).